The primary structure comprises 189 residues: Protein GrpE (189 aa).

Over residues 1 to 38 (MTKSNETERMEESEETHSSDIRSASESDHASGSDHTES) the composition is skewed to basic and acidic residues. Residues 1–54 (MTKSNETERMEESEETHSSDIRSASESDHASGSDHTESADEIPTADAEQGELEQ) form a disordered region.

The protein belongs to the GrpE family. As to quaternary structure, homodimer.

Its subcellular location is the cytoplasm. Functionally, participates actively in the response to hyperosmotic and heat shock by preventing the aggregation of stress-denatured proteins, in association with DnaK and GrpE. It is the nucleotide exchange factor for DnaK and may function as a thermosensor. Unfolded proteins bind initially to DnaJ; upon interaction with the DnaJ-bound protein, DnaK hydrolyzes its bound ATP, resulting in the formation of a stable complex. GrpE releases ADP from DnaK; ATP binding to DnaK triggers the release of the substrate protein, thus completing the reaction cycle. Several rounds of ATP-dependent interactions between DnaJ, DnaK and GrpE are required for fully efficient folding. This Tropheryma whipplei (strain Twist) (Whipple's bacillus) protein is Protein GrpE.